The chain runs to 710 residues: Ent-copalyl diphosphate synthase 1 (710 aa).

Substrate is bound at residue Lys145. The Mg(2+) site is built by Asp277 and Asp279. The short motif at 277–280 (DIDD) is the DXDD motif element. Residue Lys364 coordinates substrate.

This sequence belongs to the terpene synthase family. Tpsc subfamily. Mg(2+) is required as a cofactor. In terms of tissue distribution, expressed in germinating seeds and leaves.

The enzyme catalyses (2E,6E,10E)-geranylgeranyl diphosphate = ent-copalyl diphosphate. The protein operates within plant hormone biosynthesis; gibberellin biosynthesis. It functions in the pathway secondary metabolite biosynthesis; terpenoid biosynthesis. Functionally, involved in the biosynthesis of ent-kaurene diterpenoids natural products such as oridonin, miltiradiene, eriocalyxin B and nezukol, known to exhibit antitumor, anti-inflammatory and antibacterial activities, and in the production of gibberellins phytohormones. Catalyzes the conversion of (2E,6E,10E)-geranylgeranyl diphosphate (GGPP) to ent-copalyl diphosphate (ent-CPP). The polypeptide is Ent-copalyl diphosphate synthase 1 (Isodon eriocalyx (Plectranthus eriocalyx)).